Consider the following 623-residue polypeptide: Putative disease resistance protein At5g47280 (623 aa).

NB-ARC domains follow at residues 2 to 51 and 119 to 249; these read LFNL…VSQS and VDPR…NMLV. Position 16 to 23 (16 to 23) interacts with ATP; it reads GMIGSGKT. LRR repeat units lie at residues 488–511, 512–534, 536–558, and 560–581; these read SLNS…SKLQ, ALQL…ICEL, RLVY…IGNV, and TLEK…AVSL.

The protein belongs to the disease resistance NB-LRR family.

Its function is as follows. Potential disease resistance protein. The polypeptide is Putative disease resistance protein At5g47280 (Arabidopsis thaliana (Mouse-ear cress)).